The following is a 69-amino-acid chain: uncharacterized protein (69 aa).

This is an uncharacterized protein from Sinorhizobium fredii (strain NBRC 101917 / NGR234).